We begin with the raw amino-acid sequence, 141 residues long: MLMPKRTKYRKQMKGRNRGKAHRGNSIAFGDIAIKAIEHGRIDSRQIESARVAMTRHIKRAGKVWIRVFPDKPLTAKPLETRMGKGKGSVEKWVMNIKPGRIVYEMLGIEEGLAREALALAQSKLPFKTKIVTCESENEIY.

Residues 1 to 23 form a disordered region; the sequence is MLMPKRTKYRKQMKGRNRGKAHR.

It belongs to the universal ribosomal protein uL16 family. In terms of assembly, part of the 50S ribosomal subunit.

Binds 23S rRNA and is also seen to make contacts with the A and possibly P site tRNAs. The chain is Large ribosomal subunit protein uL16 from Helicobacter pylori (strain P12).